Reading from the N-terminus, the 238-residue chain is Opacity protein opA68 (238 aa).

Ala-1 is a signal peptide. A disordered region spans residues 88 to 109 (NLQRRTSNGNRRDRKTENQENG).

The protein belongs to the opacity porin family.

The protein localises to the cell outer membrane. In terms of biological role, implicated in a number of adherence functions. OPA proteins are implicated in pathogenesis and are subject to phase variation. The sequence is that of Opacity protein opA68 from Neisseria gonorrhoeae.